We begin with the raw amino-acid sequence, 695 residues long: Elongation factor G (695 aa).

One can recognise a tr-type G domain in the interval 5–280 (SHYRNIGIFA…AVIDFLPSPT (276 aa)). GTP-binding positions include 14-21 (AHVDAGKT), 78-82 (DTPGH), and 132-135 (NKLD). Positions 279 to 299 (PTEVDPQPLTDEETGEPTGEV) are disordered.

This sequence belongs to the TRAFAC class translation factor GTPase superfamily. Classic translation factor GTPase family. EF-G/EF-2 subfamily.

It localises to the cytoplasm. Functionally, catalyzes the GTP-dependent ribosomal translocation step during translation elongation. During this step, the ribosome changes from the pre-translocational (PRE) to the post-translocational (POST) state as the newly formed A-site-bound peptidyl-tRNA and P-site-bound deacylated tRNA move to the P and E sites, respectively. Catalyzes the coordinated movement of the two tRNA molecules, the mRNA and conformational changes in the ribosome. This chain is Elongation factor G, found in Alteromonas mediterranea (strain DSM 17117 / CIP 110805 / LMG 28347 / Deep ecotype).